The primary structure comprises 164 residues: Choriogonadotropin subunit beta (164 aa).

An N-terminal signal peptide occupies residues 1–20 (MEMLQGLLLCLLLSTGGAWA). Cystine bridges form between C29/C77, C43/C92, C46/C130, C54/C108, C58/C110, and C113/C120. Residue N50 is glycosylated (N-linked (GlcNAc...) asparagine). A disordered region spans residues 133 to 164 (HTSQDSSSKDPPRNLTSPSQLPEPADAPLVPQ). O-linked (GalNAc...) serine glycosylation is present at S140. An N-linked (GlcNAc...) asparagine glycan is attached at N146. Residue S151 is glycosylated (O-linked (GalNAc...) serine).

It belongs to the glycoprotein hormones subunit beta family. In terms of assembly, heterodimer of a common alpha chain and a unique beta chain which confers biological specificity to thyrotropin, lutropin, follitropin and gonadotropin.

The protein resides in the secreted. Functionally, stimulates the ovaries to synthesize the steroids that are essential for the maintenance of pregnancy. This Aotus nancymaae (Ma's night monkey) protein is Choriogonadotropin subunit beta (CGB).